The primary structure comprises 1011 residues: Lysosomal alpha-mannosidase (1011 aa).

The N-terminal stretch at 1-49 is a signal peptide; the sequence is MGAYARASGVCARGCLDSAGPWTMSRALRPPLPPLCFFLLLLAAAGARA. Disulfide bonds link Cys-55–Cys-358 and Cys-268–Cys-273. 2 residues coordinate Zn(2+): His-72 and Asp-74. An N-linked (GlcNAc...) asparagine glycan is attached at Asn-133. Asp-196 is a Zn(2+) binding site. Asp-196 (nucleophile) is an active-site residue. N-linked (GlcNAc...) asparagine glycans are attached at residues Asn-310 and Asn-367. 2 disulfides stabilise this stretch: Cys-412-Cys-472 and Cys-493-Cys-501. His-446 provides a ligand contact to Zn(2+). 8 N-linked (GlcNAc...) asparagine glycosylation sites follow: Asn-497, Asn-645, Asn-651, Asn-692, Asn-766, Asn-832, Asn-930, and Asn-989.

It belongs to the glycosyl hydrolase 38 family. Zn(2+) serves as cofactor. Post-translationally, first processed into 3 peptides of 70 kDa, 42 kDa (D) and 13/15 kDa (E). The 70 kDa peptide is further processed into three peptides (A, B and C). The A, B and C peptides are disulfide-linked. In terms of processing, heavily glycosylated.

It is found in the lysosome. The catalysed reaction is Hydrolysis of terminal, non-reducing alpha-D-mannose residues in alpha-D-mannosides.. Its function is as follows. Necessary for the catabolism of N-linked carbohydrates released during glycoprotein turnover. Cleaves all known types of alpha-mannosidic linkages. This Homo sapiens (Human) protein is Lysosomal alpha-mannosidase (MAN2B1).